We begin with the raw amino-acid sequence, 356 residues long: Cell division protein ZipA (356 aa).

Over 1 to 6 (MEDLQL) the chain is Periplasmic. The helical transmembrane segment at 7–27 (VLFVLGAIAIVAVLVHGFWSI) threads the bilayer. Residues 28–356 (RRQQPKSLKD…DYLHRIRANA (329 aa)) are Cytoplasmic-facing. Positions 132 to 155 (PAQPDFSLQPPVAKEQHRGPKVSR) are disordered.

It belongs to the ZipA family. Interacts with FtsZ via their C-terminal domains.

It is found in the cell inner membrane. Essential cell division protein that stabilizes the FtsZ protofilaments by cross-linking them and that serves as a cytoplasmic membrane anchor for the Z ring. Also required for the recruitment to the septal ring of downstream cell division proteins. This chain is Cell division protein ZipA, found in Shewanella baltica (strain OS185).